Here is a 241-residue protein sequence, read N- to C-terminus: Ribonuclease PH (241 aa).

Phosphate contacts are provided by residues arginine 90 and 128–130 (GTR).

This sequence belongs to the RNase PH family. In terms of assembly, homohexameric ring arranged as a trimer of dimers.

It carries out the reaction tRNA(n+1) + phosphate = tRNA(n) + a ribonucleoside 5'-diphosphate. In terms of biological role, phosphorolytic 3'-5' exoribonuclease that plays an important role in tRNA 3'-end maturation. Removes nucleotide residues following the 3'-CCA terminus of tRNAs; can also add nucleotides to the ends of RNA molecules by using nucleoside diphosphates as substrates, but this may not be physiologically important. Probably plays a role in initiation of 16S rRNA degradation (leading to ribosome degradation) during starvation. The chain is Ribonuclease PH from Corynebacterium diphtheriae (strain ATCC 700971 / NCTC 13129 / Biotype gravis).